A 487-amino-acid chain; its full sequence is Aspartyl/glutamyl-tRNA(Asn/Gln) amidotransferase subunit B (487 aa).

It belongs to the GatB/GatE family. GatB subfamily. Heterotrimer of A, B and C subunits.

The catalysed reaction is L-glutamyl-tRNA(Gln) + L-glutamine + ATP + H2O = L-glutaminyl-tRNA(Gln) + L-glutamate + ADP + phosphate + H(+). It carries out the reaction L-aspartyl-tRNA(Asn) + L-glutamine + ATP + H2O = L-asparaginyl-tRNA(Asn) + L-glutamate + ADP + phosphate + 2 H(+). In terms of biological role, allows the formation of correctly charged Asn-tRNA(Asn) or Gln-tRNA(Gln) through the transamidation of misacylated Asp-tRNA(Asn) or Glu-tRNA(Gln) in organisms which lack either or both of asparaginyl-tRNA or glutaminyl-tRNA synthetases. The reaction takes place in the presence of glutamine and ATP through an activated phospho-Asp-tRNA(Asn) or phospho-Glu-tRNA(Gln). This Chlamydia caviae (strain ATCC VR-813 / DSM 19441 / 03DC25 / GPIC) (Chlamydophila caviae) protein is Aspartyl/glutamyl-tRNA(Asn/Gln) amidotransferase subunit B.